A 395-amino-acid polypeptide reads, in one-letter code: uncharacterized protein (395 aa).

The next 12 membrane-spanning stretches (helical) occupy residues 12-34, 44-66, 75-94, 99-121, 134-156, 160-182, 208-230, 245-264, 271-293, 298-320, 341-360, and 364-381; these read LLASSLLLTIGRGATLPFMTIYL, LIGYAMTIALTIGVVFSLGFGIL, YMLLAITAFASGFIAITLVN, VVLFFALINCAYSVFATVLKAWF, FSINYTMLNIGWTIGPPLGTLLV, INLPFWLAAICSAFPMLFIQIWV, LLWFTCSGFLASFVSGAFASCIS, VVAVVLPVNAAMVVTLQYSV, ANIRALMTAGTLCFVIGLVGFIF, LLLWGMSAAVFTVGEIIYAPGEY, LGWLGAAINPLVSGVVLTSL, and SLFVILALVIIAAWVLML.

The protein belongs to the major facilitator superfamily.

It is found in the cell inner membrane. In terms of biological role, a transporter able to export peptides. When overexpressed, allows cells deleted for multiple peptidases (pepA, pepB, pepD and pepN) to grow in the presence of dipeptides Ala-Gln or Gly-Tyr which otherwise inhibit growth. Cells overexpressing this protein have decreased intracellular levels of Ala-Gln dipeptide, and in a system that produces the Ala-Gln dipeptide overproduction of this protein increases export of the dipeptide. This is an uncharacterized protein from Escherichia coli (strain K12).